Reading from the N-terminus, the 132-residue chain is U-scoloptoxin(05)-Er3a (132 aa).

The signal sequence occupies residues 1–19 (MRSWFVFVALLAVVFLPSS).

It belongs to the scoloptoxin-05 family. Contains 5 disulfide bonds. Expressed by the venom gland.

The protein resides in the secreted. This Ethmostigmus rubripes (Giant centipede) protein is U-scoloptoxin(05)-Er3a.